The following is a 296-amino-acid chain: 4-diphosphocytidyl-2-C-methyl-D-erythritol kinase (296 aa).

Lys-22 is an active-site residue. 105 to 115 (PMGGGLGGGSS) is an ATP binding site. Asp-147 is an active-site residue.

This sequence belongs to the GHMP kinase family. IspE subfamily.

It carries out the reaction 4-CDP-2-C-methyl-D-erythritol + ATP = 4-CDP-2-C-methyl-D-erythritol 2-phosphate + ADP + H(+). It functions in the pathway isoprenoid biosynthesis; isopentenyl diphosphate biosynthesis via DXP pathway; isopentenyl diphosphate from 1-deoxy-D-xylulose 5-phosphate: step 3/6. Functionally, catalyzes the phosphorylation of the position 2 hydroxy group of 4-diphosphocytidyl-2C-methyl-D-erythritol. The polypeptide is 4-diphosphocytidyl-2-C-methyl-D-erythritol kinase (Photobacterium profundum (strain SS9)).